The following is a 430-amino-acid chain: Solanesyl-diphosphate synthase 1, mitochondrial (430 aa).

Residues 1–31 constitute a mitochondrion transit peptide; it reads MSWRWALARRVAALGATSGGGDGATAQAQRL. Isopentenyl diphosphate-binding residues include lysine 133, arginine 136, and histidine 182. Mg(2+) is bound by residues aspartate 189 and aspartate 193. Arginine 198 serves as a coordination point for an all-trans-polyprenyl diphosphate. Position 199 (arginine 199) interacts with isopentenyl diphosphate. Residues lysine 275, threonine 276, glutamine 313, and lysine 330 each contribute to the an all-trans-polyprenyl diphosphate site.

It belongs to the FPP/GGPP synthase family. As to quaternary structure, homodimer. Mg(2+) is required as a cofactor. In terms of tissue distribution, expressed in leaves, stems and roots. Highest expression in roots.

The protein localises to the mitochondrion. It carries out the reaction 7 isopentenyl diphosphate + (2E)-geranyl diphosphate = all-trans-nonaprenyl diphosphate + 7 diphosphate. Its pathway is cofactor biosynthesis; ubiquinone biosynthesis. In terms of biological role, involved in the supply of solanesyl diphosphate for ubiquinone-9 (UQ-9) biosynthesis in mitochondria. Farnesyl diphosphate is the preferred substrate. In Oryza sativa subsp. japonica (Rice), this protein is Solanesyl-diphosphate synthase 1, mitochondrial.